Consider the following 233-residue polypeptide: 5'-methylthioadenosine/S-adenosylhomocysteine nucleosidase (233 aa).

Catalysis depends on Glu-12, which acts as the Proton acceptor. Residues Gly-78, Ile-152, and 173–174 (ME) contribute to the substrate site. Asp-197 (proton donor) is an active-site residue.

The protein belongs to the PNP/UDP phosphorylase family. MtnN subfamily. As to quaternary structure, homodimer.

The enzyme catalyses S-adenosyl-L-homocysteine + H2O = S-(5-deoxy-D-ribos-5-yl)-L-homocysteine + adenine. It carries out the reaction S-methyl-5'-thioadenosine + H2O = 5-(methylsulfanyl)-D-ribose + adenine. It catalyses the reaction 5'-deoxyadenosine + H2O = 5-deoxy-D-ribose + adenine. Its pathway is amino-acid biosynthesis; L-methionine biosynthesis via salvage pathway; S-methyl-5-thio-alpha-D-ribose 1-phosphate from S-methyl-5'-thioadenosine (hydrolase route): step 1/2. In terms of biological role, catalyzes the irreversible cleavage of the glycosidic bond in both 5'-methylthioadenosine (MTA) and S-adenosylhomocysteine (SAH/AdoHcy) to adenine and the corresponding thioribose, 5'-methylthioribose and S-ribosylhomocysteine, respectively. Also cleaves 5'-deoxyadenosine, a toxic by-product of radical S-adenosylmethionine (SAM) enzymes, into 5-deoxyribose and adenine. Thus, is required for in vivo function of the radical SAM enzymes biotin synthase and lipoic acid synthase, that are inhibited by 5'-deoxyadenosine accumulation. This is 5'-methylthioadenosine/S-adenosylhomocysteine nucleosidase from Yersinia pestis bv. Antiqua (strain Antiqua).